The chain runs to 72 residues: Defensin 3 (72 aa).

The first 25 residues, 1–25 (MEKKMAGFCIFFLVLFLAQEYGVEG), serve as a signal peptide directing secretion. Disulfide bonds link Cys28–Cys72, Cys39–Cys60, and Cys45–Cys66.

This sequence belongs to the DEFL family. In terms of assembly, may form dimers. Post-translationally, not glycosylated. In terms of processing, has 4 disulfide bonds.

Probably has antifungal activity. The sequence is that of Defensin 3 from Arachis hypogaea (Peanut).